The chain runs to 592 residues: Imidazole glycerol phosphate synthase hisHF, chloroplastic (592 aa).

The transit peptide at 1 to 55 (MEATAAPFSSIVSSRQNFSSSSSIRASSPASLFLSQKSIGNVNRKFKSPRSLSVR) directs the protein to the chloroplast. Residues 63 to 271 (VVTLLDYGAG…LHPKLPATQK (209 aa)) form the Glutamine amidotransferase type-1 domain. Active-site for GATase activity residues include Cys141, His246, and Glu248. The segment at 280–592 (LAKRVIACLD…LQEERIEVRI (313 aa)) is cyclase. Active-site residues include Asp289 and Asp447.

The protein in the C-terminal section; belongs to the HisA/HisF family.

It localises to the plastid. The protein localises to the chloroplast. It carries out the reaction 5-[(5-phospho-1-deoxy-D-ribulos-1-ylimino)methylamino]-1-(5-phospho-beta-D-ribosyl)imidazole-4-carboxamide + L-glutamine = D-erythro-1-(imidazol-4-yl)glycerol 3-phosphate + 5-amino-1-(5-phospho-beta-D-ribosyl)imidazole-4-carboxamide + L-glutamate + H(+). The enzyme catalyses L-glutamine + H2O = L-glutamate + NH4(+). The protein operates within amino-acid biosynthesis; L-histidine biosynthesis; L-histidine from 5-phospho-alpha-D-ribose 1-diphosphate: step 5/9. IGPS catalyzes the conversion of PRFAR and glutamine to IGP, AICAR and glutamate. The glutaminase domain produces the ammonia necessary for the cyclase domain to produce IGP and AICAR from PRFAR. The ammonia is channeled to the active site of the cyclase domain. In Arabidopsis thaliana (Mouse-ear cress), this protein is Imidazole glycerol phosphate synthase hisHF, chloroplastic (HISN4).